Here is a 283-residue protein sequence, read N- to C-terminus: Bis(5'-nucleosyl)-tetraphosphatase, symmetrical (283 aa).

The protein belongs to the Ap4A hydrolase family.

It carries out the reaction P(1),P(4)-bis(5'-adenosyl) tetraphosphate + H2O = 2 ADP + 2 H(+). In terms of biological role, hydrolyzes diadenosine 5',5'''-P1,P4-tetraphosphate to yield ADP. The polypeptide is Bis(5'-nucleosyl)-tetraphosphatase, symmetrical (Pseudomonas paraeruginosa (strain DSM 24068 / PA7) (Pseudomonas aeruginosa (strain PA7))).